Consider the following 269-residue polypeptide: Hydroxyethylthiazole kinase (269 aa).

Met-46 is a substrate binding site. ATP contacts are provided by Arg-122 and Thr-168. Gly-195 contacts substrate.

The protein belongs to the Thz kinase family. Requires Mg(2+) as cofactor.

It carries out the reaction 5-(2-hydroxyethyl)-4-methylthiazole + ATP = 4-methyl-5-(2-phosphooxyethyl)-thiazole + ADP + H(+). It participates in cofactor biosynthesis; thiamine diphosphate biosynthesis; 4-methyl-5-(2-phosphoethyl)-thiazole from 5-(2-hydroxyethyl)-4-methylthiazole: step 1/1. Catalyzes the phosphorylation of the hydroxyl group of 4-methyl-5-beta-hydroxyethylthiazole (THZ). This is Hydroxyethylthiazole kinase from Chloroflexus aurantiacus (strain ATCC 29366 / DSM 635 / J-10-fl).